We begin with the raw amino-acid sequence, 764 residues long: MIEPFGNQYIVARPVYSTNAFEENHKKTGRHHKTFLDHLKVCCSCSPQKAKRIVLSLFPIASWLPAYRLKEWLLSDIVSGISTGIVAVLQGLAFALLVDIPPVYGLYASFFPAIIYLFFGTSRHISVGPFPILSMMVGLAVSGAVSKAVPDRNATTLGLPNNSNNSSLLDDERVRVAAAASVTVLSGIIQLAFGILRIGFVVIYLSESLISGFTTAAAVHVLVSQLKFIFQLTVPSHTDPVSIFKVLYSVFSQIEKTNIADLVTALIVLLVVSIVKEINQRFKDKLPVPIPIEFIMTVIAAGVSYGCDFKNRFKVAVVGDMNPGFQPPITPDVETFQNTVGDCFGIAMVAFAVAFSVASVYSLKYDYPLDGNQELIALGLGNIVCGVFRGFAGSTALSRSAVQESTGGKTQIAGLIGAIIVLIVVLAIGFLLAPLQKSVLAALALGNLKGMLMQFAEIGRLWRKDKYDCLIWIMTFIFTIVLGLGLGLAASVAFQLLTIVFRTQFPKCSTLANIGRTNIYKNKKDYYDMYEPEGVKIFRCPSPIYFANIGFFRRKLIDAVGFSPLRILRKRNKALRKIRKLQKQGLLQVTPKGFICTVDTIKDSDEELDNNQIEVLDQPINTTDLPFHIDWNDDLPLNIEVPKISLHSLILDFSAVSFLDVSSVRGLKSILQEFIRIKVDVYIVGTDDDFIEKLNRYEFFDGEVKSSIFFLTIHDAVLHILMKKDYSTSKFNPSQEKDGKIDFTINTNGGLRNRVYEVPVETKF.

Over 1–76 the chain is Cytoplasmic; sequence MIEPFGNQYI…YRLKEWLLSD (76 aa). A helical membrane pass occupies residues 77 to 97; sequence IVSGISTGIVAVLQGLAFALL. The Extracellular portion of the chain corresponds to 98 to 99; that stretch reads VD. The chain crosses the membrane as a helical span at residues 100–120; sequence IPPVYGLYASFFPAIIYLFFG. Over 121–124 the chain is Cytoplasmic; it reads TSRH. The chain crosses the membrane as a helical span at residues 125–145; that stretch reads ISVGPFPILSMMVGLAVSGAV. Topologically, residues 146–175 are extracellular; sequence SKAVPDRNATTLGLPNNSNNSSLLDDERVR. Residues N153, N161, and N165 are each glycosylated (N-linked (GlcNAc...) asparagine). Residues 176-196 form a helical membrane-spanning segment; sequence VAAAASVTVLSGIIQLAFGIL. Position 197 (R197) is a topological domain, cytoplasmic. The chain crosses the membrane as a helical span at residues 198–218; sequence IGFVVIYLSESLISGFTTAAA. The Extracellular segment spans residues 219-257; that stretch reads VHVLVSQLKFIFQLTVPSHTDPVSIFKVLYSVFSQIEKT. Residues 258–278 form a helical membrane-spanning segment; it reads NIADLVTALIVLLVVSIVKEI. Residues 279-342 lie on the Cytoplasmic side of the membrane; it reads NQRFKDKLPV…VETFQNTVGD (64 aa). Residues 343–363 form a helical membrane-spanning segment; that stretch reads CFGIAMVAFAVAFSVASVYSL. Topologically, residues 364–374 are extracellular; that stretch reads KYDYPLDGNQE. A helical transmembrane segment spans residues 375–395; the sequence is LIALGLGNIVCGVFRGFAGST. Topologically, residues 396-411 are cytoplasmic; sequence ALSRSAVQESTGGKTQ. The helical transmembrane segment at 412-432 threads the bilayer; that stretch reads IAGLIGAIIVLIVVLAIGFLL. Over 433–469 the chain is Extracellular; it reads APLQKSVLAALALGNLKGMLMQFAEIGRLWRKDKYDC. Residues 470–490 traverse the membrane as a helical segment; the sequence is LIWIMTFIFTIVLGLGLGLAA. Residues 491–701 lie on the Cytoplasmic side of the membrane; sequence SVAFQLLTIV…EKLNRYEFFD (211 aa). The 196-residue stretch at 525–720 folds into the STAS domain; the sequence is DYYDMYEPEG…LTIHDAVLHI (196 aa). The short motif at 761-764 is the PDZ-binding element; that stretch reads ETKF.

Belongs to the SLC26A/SulP transporter (TC 2.A.53) family. As to quaternary structure, interacts with CFTR, SLC26A6 and NHERF1. Interacts with PDZK1. Interacts (via PDZ-binding motif) with NHERF4 (via the third PDZ domain); interaction leads to decreased expression of SLC26A3 on the cell membrane resulting in its reduced exchanger activity. In terms of processing, N-glycosylation is required for efficient cell surface expression, and protection from proteolytic degradation. As to expression, expressed in the colon. Expression is significantly decreased in adenomas (polyps) and adenocarcinomas of the colon.

It localises to the apical cell membrane. The protein localises to the membrane. The protein resides in the cell membrane. It carries out the reaction hydrogencarbonate(in) + 2 chloride(out) = hydrogencarbonate(out) + 2 chloride(in). Its activity is regulated as follows. Inhibited by acidic pH. Functionally, mediates chloride-bicarbonate exchange with a chloride bicarbonate stoichiometry of 2:1 in the intestinal epithelia. Plays a role in the chloride and bicarbonate homeostasis during sperm epididymal maturation and capacitation. This is Chloride anion exchanger (SLC26A3) from Homo sapiens (Human).